A 149-amino-acid polypeptide reads, in one-letter code: General odorant-binding protein 99b (149 aa).

An N-terminal signal peptide occupies residues 1 to 16 (MKVLIVLLLGLAFVLA). 3 disulfide bridges follow: cysteine 40–cysteine 71, cysteine 67–cysteine 125, and cysteine 114–cysteine 134.

It belongs to the PBP/GOBP family. As to expression, expressed in adult olfactory system. Expressed in subsets of sensilla in both olfactory organs, the maxillary palps, and third antennal segments.

Its subcellular location is the secreted. In terms of biological role, present in the aqueous fluid surrounding olfactory sensory dendrites and are thought to aid in the capture and transport of hydrophobic odorants into and through this fluid. The sequence is that of General odorant-binding protein 99b (Obp99b) from Drosophila melanogaster (Fruit fly).